The following is a 289-amino-acid chain: ATP synthase gamma chain (289 aa).

This sequence belongs to the ATPase gamma chain family. F-type ATPases have 2 components, CF(1) - the catalytic core - and CF(0) - the membrane proton channel. CF(1) has five subunits: alpha(3), beta(3), gamma(1), delta(1), epsilon(1). CF(0) has three main subunits: a, b and c.

The protein localises to the cell membrane. In terms of biological role, produces ATP from ADP in the presence of a proton gradient across the membrane. The gamma chain is believed to be important in regulating ATPase activity and the flow of protons through the CF(0) complex. This Alkaliphilus metalliredigens (strain QYMF) protein is ATP synthase gamma chain.